Consider the following 345-residue polypeptide: D-alanine--D-alanine ligase (345 aa).

One can recognise an ATP-grasp domain in the interval 133–332 (KWLCHARGVK…LPHTKRAKVT (200 aa)). Residue 160–211 (AYPIIVKPSRLGSSIGVSIVKDESKLDYALDSAFEFDNTVIVEPFLEGVKEY) coordinates ATP. Mg(2+)-binding residues include D284, E296, and N298.

It belongs to the D-alanine--D-alanine ligase family. It depends on Mg(2+) as a cofactor. Mn(2+) is required as a cofactor.

Its subcellular location is the cytoplasm. The catalysed reaction is 2 D-alanine + ATP = D-alanyl-D-alanine + ADP + phosphate + H(+). It functions in the pathway cell wall biogenesis; peptidoglycan biosynthesis. Its function is as follows. Cell wall formation. The protein is D-alanine--D-alanine ligase of Sulfurimonas denitrificans (strain ATCC 33889 / DSM 1251) (Thiomicrospira denitrificans (strain ATCC 33889 / DSM 1251)).